The primary structure comprises 111 residues: Aspartate 1-decarboxylase (111 aa).

The active-site Schiff-base intermediate with substrate; via pyruvic acid is serine 25. Serine 25 bears the Pyruvic acid (Ser) mark. Threonine 57 contacts substrate. The active-site Proton donor is tyrosine 58. 73–75 contributes to the substrate binding site; sequence GPA.

This sequence belongs to the PanD family. In terms of assembly, heterooctamer of four alpha and four beta subunits. Pyruvate serves as cofactor. Post-translationally, is synthesized initially as an inactive proenzyme, which is activated by self-cleavage at a specific serine bond to produce a beta-subunit with a hydroxyl group at its C-terminus and an alpha-subunit with a pyruvoyl group at its N-terminus.

Its subcellular location is the cytoplasm. The enzyme catalyses L-aspartate + H(+) = beta-alanine + CO2. The protein operates within cofactor biosynthesis; (R)-pantothenate biosynthesis; beta-alanine from L-aspartate: step 1/1. Its function is as follows. Catalyzes the pyruvoyl-dependent decarboxylation of aspartate to produce beta-alanine. In Coxiella burnetii (strain RSA 493 / Nine Mile phase I), this protein is Aspartate 1-decarboxylase.